Reading from the N-terminus, the 469-residue chain is 3-isopropylmalate dehydratase large subunit (469 aa).

Positions 347, 408, and 411 each coordinate [4Fe-4S] cluster.

The protein belongs to the aconitase/IPM isomerase family. LeuC type 1 subfamily. Heterodimer of LeuC and LeuD. [4Fe-4S] cluster serves as cofactor.

It catalyses the reaction (2R,3S)-3-isopropylmalate = (2S)-2-isopropylmalate. It functions in the pathway amino-acid biosynthesis; L-leucine biosynthesis; L-leucine from 3-methyl-2-oxobutanoate: step 2/4. Its function is as follows. Catalyzes the isomerization between 2-isopropylmalate and 3-isopropylmalate, via the formation of 2-isopropylmaleate. The polypeptide is 3-isopropylmalate dehydratase large subunit (Histophilus somni (strain 129Pt) (Haemophilus somnus)).